The sequence spans 21 residues: Japonicin-2 (21 aa).

A disulfide bond links Cys14 and Cys21.

As to expression, expressed by the skin glands.

Its subcellular location is the secreted. Its function is as follows. Antibacterial activity against the Gram-negative bacterium E.coli and the Gram-positive bacterium S.aureus. The protein is Japonicin-2 of Rana japonica (Japanese reddish frog).